A 605-amino-acid polypeptide reads, in one-letter code: Probable Xaa-Pro aminopeptidase P (605 aa).

D402, D413, E511, and E525 together coordinate Mn(2+).

The protein belongs to the peptidase M24B family. It depends on Mn(2+) as a cofactor.

It carries out the reaction Release of any N-terminal amino acid, including proline, that is linked to proline, even from a dipeptide or tripeptide.. Catalyzes the removal of a penultimate prolyl residue from the N-termini of peptides. The polypeptide is Probable Xaa-Pro aminopeptidase P (AMPP) (Leptosphaeria maculans (strain JN3 / isolate v23.1.3 / race Av1-4-5-6-7-8) (Blackleg fungus)).